The sequence spans 342 residues: Foldase protein PrsA (342 aa).

The signal sequence occupies residues 1–22 (MVSVKKIVASALVGVLMFSAVG). Residue Cys23 is the site of N-palmitoyl cysteine attachment. Cys23 carries the S-diacylglycerol cysteine lipid modification. The PpiC domain maps to 190-284 (AKGVLARHLL…FGYHIIQAGA (95 aa)).

It belongs to the PrsA family.

The protein resides in the cell membrane. It catalyses the reaction [protein]-peptidylproline (omega=180) = [protein]-peptidylproline (omega=0). Plays a major role in protein secretion by helping the post-translocational extracellular folding of several secreted proteins. The polypeptide is Foldase protein PrsA (Clostridium perfringens (strain SM101 / Type A)).